Consider the following 376-residue polypeptide: Alpha-centractin (376 aa).

Residue Met1 is modified to N-acetylmethionine.

Belongs to the actin family. ARP1 subfamily. Part of the ACTR1A/ACTB filament around which the dynactin complex is built. The filament contains 8 copies of ACTR1A and 1 ACTB. Interacts with dynein and adapters such as BICD2. Interacts with BCCIP (isoform 2/alpha).

The protein localises to the cytoplasm. It is found in the cytoskeleton. Its subcellular location is the microtubule organizing center. It localises to the centrosome. The protein resides in the cell cortex. In terms of biological role, part of the ACTR1A/ACTB filament around which the dynactin complex is built. The dynactin multiprotein complex activates the molecular motor dynein for ultra-processive transport along microtubules. In Canis lupus familiaris (Dog), this protein is Alpha-centractin (ACTR1A).